Consider the following 427-residue polypeptide: Trigger factor (427 aa).

The PPIase FKBP-type domain maps to Gly-163–Pro-248.

It belongs to the FKBP-type PPIase family. Tig subfamily.

Its subcellular location is the cytoplasm. It carries out the reaction [protein]-peptidylproline (omega=180) = [protein]-peptidylproline (omega=0). Functionally, involved in protein export. Acts as a chaperone by maintaining the newly synthesized protein in an open conformation. Functions as a peptidyl-prolyl cis-trans isomerase. This Streptococcus gordonii (strain Challis / ATCC 35105 / BCRC 15272 / CH1 / DL1 / V288) protein is Trigger factor.